A 376-amino-acid chain; its full sequence is Peroxisomal membrane protein PEX14 (376 aa).

Residues 1–12 (MASSEQAEQPNQ) show a composition bias toward polar residues. A disordered region spans residues 1-24 (MASSEQAEQPNQPSSPPGSENVVP). Alanine 2 bears the N-acetylalanine mark. Residues 2 to 108 (ASSEQAEQPN…YSPRGSRWRD (107 aa)) lie on the Peroxisomal side of the membrane. The residue at position 34 (lysine 34) is an N6-acetyllysine. Positions 70-102 (SGTAADEPSPLGPATPVVPVQPPHLTPQPYSPR) are disordered. The segment covering 88 to 99 (PVQPPHLTPQPY) has biased composition (pro residues). The helical transmembrane segment at 109 to 127 (YGALAIIMAGIAFGFHQLY) threads the bilayer. The Cytoplasmic portion of the chain corresponds to 128–376 (KRYLLPLILG…EGASNETERD (249 aa)). Residues 230–376 (PPSPSAPKIP…EGASNETERD (147 aa)) form a disordered region. At serine 232 the chain carries Phosphoserine. Composition is skewed to low complexity over residues 247-259 (SSSP…VNHH) and 265-275 (SPVSNESTSSS). Phosphoserine is present on residues serine 282 and serine 334. Over residues 323–341 (KEDEDDEDDDVSHVDEEDV) the composition is skewed to acidic residues. Positions 359-376 (QVEKLRRPEGASNETERD) are enriched in basic and acidic residues.

This sequence belongs to the peroxin-14 family. Interacts with PEX13; forming the PEX13-PEX14 docking complex. Interacts with PEX5 (via WxxxF/Y motifs). Interacts with PEX19. Interacts with tubulin.

The protein localises to the peroxisome membrane. Its function is as follows. Component of the PEX13-PEX14 docking complex, a translocon channel that specifically mediates the import of peroxisomal cargo proteins bound to PEX5 receptor. The PEX13-PEX14 docking complex forms a large import pore which can be opened to a diameter of about 9 nm. Mechanistically, PEX5 receptor along with cargo proteins associates with the PEX14 subunit of the PEX13-PEX14 docking complex in the cytosol, leading to the insertion of the receptor into the organelle membrane with the concomitant translocation of the cargo into the peroxisome matrix. Plays a key role for peroxisome movement through a direct interaction with tubulin. In Mus musculus (Mouse), this protein is Peroxisomal membrane protein PEX14.